Consider the following 70-residue polypeptide: Cold shock-like protein CspI (70 aa).

The 61-residue stretch at 7–67 folds into the CSD domain; the sequence is GLVKWFNPEK…GPKGPAAVHV (61 aa).

It localises to the cytoplasm. This chain is Cold shock-like protein CspI (cspI), found in Escherichia coli O6:H1 (strain CFT073 / ATCC 700928 / UPEC).